Reading from the N-terminus, the 491-residue chain is MLIFEKSRKNRRTLAHAIADKMDANDIPANLLRHDAPRLPELSELEVVRHFTRLSRQNFSIDTHFYPLGSCTMKYNPRAANRLASLPGYLKRHPLSPAPQSQAFLQCLYELQTMLTEITGMEKISLTSMAGAQGEFAGVAMIKAYHESRGDYDRTEMIVPDAAHGTNPASAAMCGFTVKEISTTKDGDIDLEKLRQMAGAKTAGIMLTNPSTLGVFERQISEVAKIIHNAGGLLYYDGANLNAILGKYRPGDMGFDVMHLNLHKTFATPHGGGGPGAGPVAAGPRLSKFLPVPMVGKNKEGYDWLTEKECPKSIGRLSAFMGNSGVLLRAYIYLRLLGKEGLSRVAEFSTLNANYLMKRLEQLGFTLAFPNRRASHEFIITLKPLTRAYGVTALDIAKRLLDYGFHAPTIYFPLLVPECLLIEPTETESKQTLDHFIEAMEKILTEIKTTPDLLRNAPHQQLINRLDEVKAARELDLRWYPIAKETEIFIQ.

Lys-264 carries the N6-(pyridoxal phosphate)lysine modification.

It belongs to the GcvP family. C-terminal subunit subfamily. The glycine cleavage system is composed of four proteins: P, T, L and H. In this organism, the P 'protein' is a heterodimer of two subunits. The cofactor is pyridoxal 5'-phosphate.

The enzyme catalyses N(6)-[(R)-lipoyl]-L-lysyl-[glycine-cleavage complex H protein] + glycine + H(+) = N(6)-[(R)-S(8)-aminomethyldihydrolipoyl]-L-lysyl-[glycine-cleavage complex H protein] + CO2. Functionally, the glycine cleavage system catalyzes the degradation of glycine. The P protein binds the alpha-amino group of glycine through its pyridoxal phosphate cofactor; CO(2) is released and the remaining methylamine moiety is then transferred to the lipoamide cofactor of the H protein. In Coxiella burnetii (strain CbuG_Q212) (Coxiella burnetii (strain Q212)), this protein is Probable glycine dehydrogenase (decarboxylating) subunit 2.